The chain runs to 173 residues: RTX-III toxin-activating lysine-acyltransferase ApxIIC (173 aa).

Residues His-29 and Asp-98 contribute to the active site.

The protein belongs to the RTX toxin acyltransferase family. As to quaternary structure, homodimer.

The protein localises to the cytoplasm. It carries out the reaction a fatty acyl-[ACP] + L-lysyl-[protein] = N(6)-(fatty acyl)-L-lysyl-[protein] + holo-[ACP] + H(+). Protein-lysine acyltransferase that catalyzes fatty acylation of the protoxin, thereby converting it to the active toxin. This chain is RTX-III toxin-activating lysine-acyltransferase ApxIIC (apxIIIC), found in Actinobacillus pleuropneumoniae (Haemophilus pleuropneumoniae).